The chain runs to 430 residues: Adenylosuccinate synthetase (430 aa).

GTP contacts are provided by residues 12-18 and 40-42; these read GDEGKGK and GHT. Catalysis depends on aspartate 13, which acts as the Proton acceptor. Residues aspartate 13 and glycine 40 each contribute to the Mg(2+) site. IMP contacts are provided by residues 13 to 16, 38 to 41, threonine 128, arginine 142, glutamine 223, threonine 238, and arginine 302; these read DEGK and NAGH. Histidine 41 serves as the catalytic Proton donor. 298-304 is a binding site for substrate; the sequence is TTTGRPR. Residues arginine 304, 330–332, and 412–414 each bind GTP; these read SID and SVG.

It belongs to the adenylosuccinate synthetase family. As to quaternary structure, homodimer. It depends on Mg(2+) as a cofactor.

Its subcellular location is the cytoplasm. The enzyme catalyses IMP + L-aspartate + GTP = N(6)-(1,2-dicarboxyethyl)-AMP + GDP + phosphate + 2 H(+). It participates in purine metabolism; AMP biosynthesis via de novo pathway; AMP from IMP: step 1/2. Plays an important role in the de novo pathway of purine nucleotide biosynthesis. Catalyzes the first committed step in the biosynthesis of AMP from IMP. The chain is Adenylosuccinate synthetase from Streptococcus pyogenes serotype M3 (strain ATCC BAA-595 / MGAS315).